A 212-amino-acid chain; its full sequence is Large ribosomal subunit protein uL3 (212 aa).

The disordered stretch occupies residues 129–156 (RRGPMGHGSKNHRAPGSTGAGTTPGRIY). The span at 142 to 153 (APGSTGAGTTPG) shows a compositional bias: low complexity.

It belongs to the universal ribosomal protein uL3 family. As to quaternary structure, part of the 50S ribosomal subunit. Forms a cluster with proteins L14 and L19.

In terms of biological role, one of the primary rRNA binding proteins, it binds directly near the 3'-end of the 23S rRNA, where it nucleates assembly of the 50S subunit. The sequence is that of Large ribosomal subunit protein uL3 from Acaryochloris marina (strain MBIC 11017).